Reading from the N-terminus, the 564-residue chain is MSEITLGRYLFERLKQVEVQTIFGLPGDFNLSLLDKIYEVPGMRWAGNANELNAAYAADGYARLKGMACVITTFGVGELSALNGIAGSYAEHVGVLHVVGVPSISSQAKQLLLHHTLGNGDFTVFHRMSSNISETTAMITDINSAPSEIDRCIRTTYISQRPVYLGLPANLVDLKVPASLLETPIDLSLKPNDPEAENEVLETVLELIKDAKNPVILADACCSRHNVKAETKKLIDITQFPAFVTPMGKGSIDEQHPRFGGVYVGTLSSPEVKEAVESADLVLSVGALLSDFNTGSFSYSYKTKNIVEFHSDYIKVRNATFPGVQMKFVLQKLLTKVKDAAKGYKPVPVPHAPRDNKPVADSTPLKQEWVWTQVGKFLQEGDVVLTETGTSAFGINQTHFPNDTYGISQVLWGSIGFTGGATLGAAFAAEEIDPKKRVILFIGDGSLQLTVQEISTMIRWGLKPYLFVLNNDGYTIERLIHGETAQYNCIQSWKHLDLLPTFGAKDYEAVRVATTGEWNKLTTDKKFQENSKIRLIEVMLPVMDAPSNLVKQAQLTASINAKQE.

Asp-28 and His-115 together coordinate pyruvate. Thiamine diphosphate is bound by residues Thr-390 and 413–415 (GSI). Asp-444 lines the Mg(2+) pocket. Residues 445 to 446 (GS) and 471 to 476 (NDGYTI) each bind thiamine diphosphate. The Mg(2+) site is built by Asn-471 and Gly-473. Glu-477 is a pyruvate binding site.

Belongs to the TPP enzyme family. Homotetramer. It depends on Mg(2+) as a cofactor. The cofactor is thiamine diphosphate.

The catalysed reaction is a 2-oxocarboxylate + H(+) = an aldehyde + CO2. It carries out the reaction pyruvate + H(+) = acetaldehyde + CO2. This is Pyruvate decarboxylase (PDC1) from Kluyveromyces marxianus (Yeast).